The sequence spans 183 residues: Bifunctional protein PyrR (183 aa).

The short motif at 102–114 (VVLVDDVLFSGRT) is the PRPP-binding element.

Belongs to the purine/pyrimidine phosphoribosyltransferase family. PyrR subfamily.

It catalyses the reaction UMP + diphosphate = 5-phospho-alpha-D-ribose 1-diphosphate + uracil. Its function is as follows. Regulates the transcription of the pyrimidine nucleotide (pyr) operon in response to exogenous pyrimidines. Also displays a weak uracil phosphoribosyltransferase activity which is not physiologically significant. The chain is Bifunctional protein PyrR from Leifsonia xyli subsp. xyli (strain CTCB07).